Consider the following 146-residue polypeptide: Large ribosomal subunit protein uL15 (146 aa).

The segment covering Met1–Arg13 has biased composition (basic and acidic residues). A disordered region spans residues Met1–Gln54. Gly residues-rich tracts occupy residues Arg21–Ala31 and Ser42–Gly52.

Belongs to the universal ribosomal protein uL15 family. Part of the 50S ribosomal subunit.

Its function is as follows. Binds to the 23S rRNA. The sequence is that of Large ribosomal subunit protein uL15 from Bacillus velezensis (strain DSM 23117 / BGSC 10A6 / LMG 26770 / FZB42) (Bacillus amyloliquefaciens subsp. plantarum).